The sequence spans 124 residues: Small ribosomal subunit protein uS12 (124 aa).

The residue at position 89 (aspartate 89) is a 3-methylthioaspartic acid.

This sequence belongs to the universal ribosomal protein uS12 family. In terms of assembly, part of the 30S ribosomal subunit. Contacts proteins S8 and S17. May interact with IF1 in the 30S initiation complex.

With S4 and S5 plays an important role in translational accuracy. Its function is as follows. Interacts with and stabilizes bases of the 16S rRNA that are involved in tRNA selection in the A site and with the mRNA backbone. Located at the interface of the 30S and 50S subunits, it traverses the body of the 30S subunit contacting proteins on the other side and probably holding the rRNA structure together. The combined cluster of proteins S8, S12 and S17 appears to hold together the shoulder and platform of the 30S subunit. The protein is Small ribosomal subunit protein uS12 of Mannheimia succiniciproducens (strain KCTC 0769BP / MBEL55E).